A 535-amino-acid polypeptide reads, in one-letter code: CTP synthase (535 aa).

Residues 1–267 (MTKYIFVTGG…DKLVCDHMKL (267 aa)) are amidoligase domain. Serine 13 lines the CTP pocket. Serine 13 is a binding site for UTP. 14–19 (SLGKGI) is an ATP binding site. L-glutamine is bound at residue tyrosine 54. Residue aspartate 71 participates in ATP binding. Mg(2+) contacts are provided by aspartate 71 and glutamate 141. Residues 148-150 (DIE), 188-193 (KTKPTQ), and lysine 224 contribute to the CTP site. Residues 188-193 (KTKPTQ) and lysine 224 contribute to the UTP site. The region spanning 292–534 (TISLVGKYVE…IGASVQAAEQ (243 aa)) is the Glutamine amidotransferase type-1 domain. Glycine 354 provides a ligand contact to L-glutamine. Cysteine 381 serves as the catalytic Nucleophile; for glutamine hydrolysis. L-glutamine is bound by residues 382–385 (LGMQ), glutamate 405, and arginine 462. Active-site residues include histidine 507 and glutamate 509.

The protein belongs to the CTP synthase family. As to quaternary structure, homotetramer.

It carries out the reaction UTP + L-glutamine + ATP + H2O = CTP + L-glutamate + ADP + phosphate + 2 H(+). The catalysed reaction is L-glutamine + H2O = L-glutamate + NH4(+). It catalyses the reaction UTP + NH4(+) + ATP = CTP + ADP + phosphate + 2 H(+). It participates in pyrimidine metabolism; CTP biosynthesis via de novo pathway; CTP from UDP: step 2/2. Its activity is regulated as follows. Allosterically activated by GTP, when glutamine is the substrate; GTP has no effect on the reaction when ammonia is the substrate. The allosteric effector GTP functions by stabilizing the protein conformation that binds the tetrahedral intermediate(s) formed during glutamine hydrolysis. Inhibited by the product CTP, via allosteric rather than competitive inhibition. Its function is as follows. Catalyzes the ATP-dependent amination of UTP to CTP with either L-glutamine or ammonia as the source of nitrogen. Regulates intracellular CTP levels through interactions with the four ribonucleotide triphosphates. This is CTP synthase from Bacillus velezensis (strain DSM 23117 / BGSC 10A6 / LMG 26770 / FZB42) (Bacillus amyloliquefaciens subsp. plantarum).